The following is a 103-amino-acid chain: Small ribosomal subunit protein uS14c (103 aa).

The disordered stretch occupies residues 34-56 (KVSPLSLSEKTKMREKLQSLPRN).

Belongs to the universal ribosomal protein uS14 family. As to quaternary structure, part of the 30S ribosomal subunit.

Its subcellular location is the plastid. The protein localises to the chloroplast. Functionally, binds 16S rRNA, required for the assembly of 30S particles. The chain is Small ribosomal subunit protein uS14c from Triticum aestivum (Wheat).